We begin with the raw amino-acid sequence, 915 residues long: MPSDIMEQRGVSTPSHFHEDIHITSERQFGFMKTDMMPENQGGRDRLSSMPKSSWTSESYQLKPQSSFSGSHPSGSPNARNTTNGSQWESSLFSSSMSDLFSRKLRLQGSDMLSTMSANTVVTHREEEPSESLEEIEAQTIGNLLPDEDDLFAEVTGEVGRKSRANTGDELDEFDLFSSVGGMELDGDIFSSVSHRNGERGGNNSVGELNRGEIPSRTLLVGNISSNVEDYELKVLFEQFGDIQALHTACKNRGFIMVSYCDIRAAQNAARALQNKLLRGTKLDIRYSISKENPSQKDTSKGALLVNNLDSSISNQELNRLVKSYGEVKEIRRTMHDNSQIYIEFFDVRAAAAALGGLNGLEVAGKKLQLVPTYPEGTRYTSQCAANDTEGCLPKTSYSNTSSGHIGRHFPGMISSTSSDGGSMRVIHNSIGSPVNSFIERHRSLSIPIGFPPSANGISASKPVGLQEHGHHFDNSNMGIQSMPNLHPHSFSEYVDNFANGSPYTSSAFSEMVSDGSKANEGFMIHNVRGVEGFSGGGIGSPMHQSSRRPINLWSNSNTQQQNPSSGMMWPNSPSHINSIPTQRPPVTVFSRAPPIMVNMASSPVHHHIGSAPVLNSPFWDRRQAYVAESLESSGFHIGSHGSMGIPGSSPSHPMDIGSHKTFSVGGNRMDVNSQNAVLRSPQQLSHLFPGRSPMGSMPGSFDSPNERYRNLSHRRSESSSSNADKKLYELDVDRILRGEDRRTTLMIKNIPNKYTSKMLLSAIDEHCKGTYDFLYLPIDFKNKCNVGYAFINLIEPEKIVPFFKAFNGKKWEKFNSEKVATLTYARIQGKTALIAHFQNSSLMNEDKRCRPILFHTDGPNAGDQEPFPMGSNIRSRPGKPRSSSIDNYNSFSISSVSENREETPNGTDPFLKEN.

The segment at 1–90 is disordered; it reads MPSDIMEQRG…NTTNGSQWES (90 aa). A compositionally biased stretch (basic and acidic residues) spans 16 to 25; that stretch reads HFHEDIHITS. Residues 50–65 are compositionally biased toward polar residues; it reads MPKSSWTSESYQLKPQ. Over residues 66 to 77 the composition is skewed to low complexity; the sequence is SSFSGSHPSGSP. A Phosphoserine modification is found at serine 76. Residues 78 to 89 are compositionally biased toward polar residues; sequence NARNTTNGSQWE. RRM domains follow at residues 217 to 290 and 302 to 375; these read RTLL…YSIS and GALL…PTYP. 2 disordered regions span residues 690 to 723 and 854 to 915; these read PGRSPMGSMPGSFDSPNERYRNLSHRRSESSSSN and LFHT…LKEN. The segment covering 705 to 723 has biased composition (basic and acidic residues); sequence PNERYRNLSHRRSESSSSN. A compositionally biased stretch (polar residues) spans 882 to 898; the sequence is RSSSIDNYNSFSISSVS.

In terms of tissue distribution, expressed in roots, shoots, leaves, flowers and siliques.

Its function is as follows. Probable RNA-binding transcriptional activator that plays a role in meiosis and vegetative growth. May be a downstream effector of TOR signaling pathway and recruited by RAPTOR1 for TOR substrate. The sequence is that of Protein MEI2-like 1 (ML1) from Arabidopsis thaliana (Mouse-ear cress).